A 280-amino-acid polypeptide reads, in one-letter code: 2-dehydro-3-deoxyphosphooctonate aldolase (280 aa).

It belongs to the KdsA family.

Its subcellular location is the cytoplasm. The catalysed reaction is D-arabinose 5-phosphate + phosphoenolpyruvate + H2O = 3-deoxy-alpha-D-manno-2-octulosonate-8-phosphate + phosphate. The protein operates within carbohydrate biosynthesis; 3-deoxy-D-manno-octulosonate biosynthesis; 3-deoxy-D-manno-octulosonate from D-ribulose 5-phosphate: step 2/3. It functions in the pathway bacterial outer membrane biogenesis; lipopolysaccharide biosynthesis. The protein is 2-dehydro-3-deoxyphosphooctonate aldolase of Thioalkalivibrio sulfidiphilus (strain HL-EbGR7).